Here is a 703-residue protein sequence, read N- to C-terminus: Putative glycosyl hydrolase ecdE (703 aa).

A signal peptide spans 1-21 (MKLNIFASAILLCTSAFPVAA). Residue aspartate 47 is part of the active site. Residues asparagine 104, asparagine 120, asparagine 293, asparagine 397, asparagine 443, and asparagine 641 are each glycosylated (N-linked (GlcNAc...) asparagine).

This sequence belongs to the glycosyl hydrolase 32 family.

This Aspergillus rugulosus (Emericella rugulosa) protein is Putative glycosyl hydrolase ecdE.